A 92-amino-acid chain; its full sequence is Beta-2-microglobulin (92 aa).

Residues Pro2 to Ile91 enclose the Ig-like C1-type domain. A disulfide bond links Cys22 and Cys77.

The protein belongs to the beta-2-microglobulin family. Heterodimer of an alpha chain and a beta chain. Beta-2-microglobulin is the beta-chain of major histocompatibility complex class I molecules.

It is found in the secreted. Component of the class I major histocompatibility complex (MHC). Involved in the presentation of peptide antigens to the immune system. The sequence is that of Beta-2-microglobulin (B2m) from Mus cervicolor (Fawn-colored mouse).